The following is a 180-amino-acid chain: ATP-dependent protease subunit HslV (180 aa).

Threonine 7 is a catalytic residue. Na(+)-binding residues include alanine 162, cysteine 165, and threonine 168.

It belongs to the peptidase T1B family. HslV subfamily. In terms of assembly, a double ring-shaped homohexamer of HslV is capped on each side by a ring-shaped HslU homohexamer. The assembly of the HslU/HslV complex is dependent on binding of ATP.

The protein localises to the cytoplasm. It carries out the reaction ATP-dependent cleavage of peptide bonds with broad specificity.. Its activity is regulated as follows. Allosterically activated by HslU binding. Protease subunit of a proteasome-like degradation complex believed to be a general protein degrading machinery. This chain is ATP-dependent protease subunit HslV, found in Dichelobacter nodosus (strain VCS1703A).